The primary structure comprises 491 residues: Acetylcholine receptor subunit epsilon (491 aa).

An N-terminal signal peptide occupies residues 1 to 20 (MAGALLCALLLLQLLGRGEG). At 21–239 (KNEELRLYHY…VIYSLIIRRK (219 aa)) the chain is on the extracellular side. N-linked (GlcNAc...) asparagine glycosylation is found at N86 and N161. C148 and C162 are disulfide-bonded. Residues 240–264 (PLFYVINIIVPCVLISGLVLLAYFL) form a helical membrane-spanning segment. At 265–272 (PAQAGGQK) the chain is on the cytoplasmic side. Residues 273 to 291 (CTVSINVLLAQTVFLFLIA) traverse the membrane as a helical segment. Over 292 to 306 (QKTPETSLSVPLLGR) the chain is Extracellular. The helical transmembrane segment at 307 to 328 (YLIFVMVVATLIVMNCVIVLNV) threads the bilayer. Topologically, residues 329 to 456 (SLRTPTTHAM…WVRMGKALDS (128 aa)) are cytoplasmic. Residues 457–480 (ICFWAALVLFLVGSSLIFLGAYFN) traverse the membrane as a helical segment. Topologically, residues 481 to 491 (RVPQLPYPPCM) are extracellular.

Belongs to the ligand-gated ion channel (TC 1.A.9) family. Acetylcholine receptor (TC 1.A.9.1) subfamily. Epsilon/CHRNE sub-subfamily.

The protein resides in the postsynaptic cell membrane. It localises to the cell membrane. The enzyme catalyses K(+)(in) = K(+)(out). It carries out the reaction Na(+)(in) = Na(+)(out). Functionally, after binding acetylcholine, the AChR responds by an extensive change in conformation that affects all subunits and leads to opening of an ion-conducting channel across the plasma membrane. The sequence is that of Acetylcholine receptor subunit epsilon (CHRNE) from Bos taurus (Bovine).